Consider the following 185-residue polypeptide: Ribosome-recycling factor (185 aa).

It belongs to the RRF family.

It localises to the cytoplasm. Responsible for the release of ribosomes from messenger RNA at the termination of protein biosynthesis. May increase the efficiency of translation by recycling ribosomes from one round of translation to another. The sequence is that of Ribosome-recycling factor from Shewanella halifaxensis (strain HAW-EB4).